We begin with the raw amino-acid sequence, 347 residues long: NADH-ubiquinone oxidoreductase chain 2 (347 aa).

11 helical membrane passes run 2-22 (SPYVLTIMSFSLLLGTTMTLI), 25-45 (HWLTAWMGLEINTLAIIPLMT), 56-76 (AIKYFMIQATASMIILFSAIF), 96-116 (FMMTIALAMKLGLAPFHFWVP), 122-142 (IPLLSGMLLLTWQKIAPISIF), 149-169 (LNMSLLMILSITSTLLGGWGG), 178-197 (ILAYSSIAHMGWMAIIIMIY), 202-219 (ILNLILYLASTITMFMVL), 241-261 (MIIITLTLLSLGGLPPLTGFM), 278-298 (LAMMLALSTLLNLFFYMRIIY), and 326-346 (IPTLTIISSLLLPMTPVFITL).

It belongs to the complex I subunit 2 family.

It localises to the mitochondrion inner membrane. The catalysed reaction is a ubiquinone + NADH + 5 H(+)(in) = a ubiquinol + NAD(+) + 4 H(+)(out). Functionally, core subunit of the mitochondrial membrane respiratory chain NADH dehydrogenase (Complex I) that is believed to belong to the minimal assembly required for catalysis. Complex I functions in the transfer of electrons from NADH to the respiratory chain. The immediate electron acceptor for the enzyme is believed to be ubiquinone. This is NADH-ubiquinone oxidoreductase chain 2 (MT-ND2) from Didelphis virginiana (North American opossum).